The primary structure comprises 247 residues: tRNA uridine(34) hydroxylase (247 aa).

The Rhodanese domain occupies 124-218 (TKQDVIVIDT…YLEDTQNKNN (95 aa)). Cys178 acts as the Cysteine persulfide intermediate in catalysis.

The protein belongs to the TrhO family.

It carries out the reaction uridine(34) in tRNA + AH2 + O2 = 5-hydroxyuridine(34) in tRNA + A + H2O. Functionally, catalyzes oxygen-dependent 5-hydroxyuridine (ho5U) modification at position 34 in tRNAs. This chain is tRNA uridine(34) hydroxylase, found in Rickettsia massiliae (strain Mtu5).